A 333-amino-acid chain; its full sequence is MLRSRVPANIRAFDAFPKFSKEYRRQSSSRGGFFTILLSVLIVVLVFSQCVQYIRGIREQELFIYDSVSELMDLNIDITIAMPCSNLRIDVVDRTKDLVLATEALTLEEAFIKDMPTSSTIYKNDRYAGLRWARTEKFRKKNNAEPGSGTACRIYGQLVVNRVNGQLHITAPGWGYGRSNIPFHSLNFTHYIEELSFGEYYPALVNALDGHYGHANDHPFAFQYYLSVLPTSYKSSFRSFETNQYSLTENSVVRQLGFGSLPPGIFIDYDLEPLAVRVVDKHPNVASTLLRILAISGGLITVASWIERVYSSRAHRSTSEADMLGLLGKSETE.

Residues 1–30 (MLRSRVPANIRAFDAFPKFSKEYRRQSSSR) are Cytoplasmic-facing. The chain crosses the membrane as a helical span at residues 31–51 (GGFFTILLSVLIVVLVFSQCV). At 52-285 (QYIRGIREQE…VRVVDKHPNV (234 aa)) the chain is on the lumenal side. A glycan (N-linked (GlcNAc...) asparagine) is linked at Asn-187. A helical membrane pass occupies residues 286–306 (ASTLLRILAISGGLITVASWI). Over 307–333 (ERVYSSRAHRSTSEADMLGLLGKSETE) the chain is Cytoplasmic. 2 positions are modified to phosphoserine: Ser-317 and Ser-319.

Belongs to the ERGIC family.

The protein resides in the endoplasmic reticulum membrane. It localises to the golgi apparatus membrane. It is found in the endoplasmic reticulum-Golgi intermediate compartment membrane. Functionally, constituent of COPII-coated endoplasmic reticulum-derived transport vesicles. Required for efficient transport of a subset of secretory proteins to the Golgi. Facilitates retrograde transport from the Golgi to the endoplasmic reticulum. This chain is ER-derived vesicles protein 41 (erv41), found in Schizosaccharomyces pombe (strain 972 / ATCC 24843) (Fission yeast).